Consider the following 253-residue polypeptide: uncharacterized protein (253 aa).

This is an uncharacterized protein from Campylobacter jejuni subsp. jejuni serotype O:2 (strain ATCC 700819 / NCTC 11168).